Here is a 316-residue protein sequence, read N- to C-terminus: Adenine deaminase (316 aa).

Residues His14, His16, and His194 each coordinate Zn(2+). Residue Glu197 is the Proton donor of the active site. Asp275 serves as a coordination point for Zn(2+). Asp276 serves as a coordination point for substrate.

The protein belongs to the metallo-dependent hydrolases superfamily. Adenosine and AMP deaminases family. Adenine deaminase type 2 subfamily. Zn(2+) serves as cofactor.

The enzyme catalyses adenine + H2O + H(+) = hypoxanthine + NH4(+). Catalyzes the hydrolytic deamination of adenine to hypoxanthine. Plays an important role in the purine salvage pathway and in nitrogen catabolism. The chain is Adenine deaminase from Bordetella avium (strain 197N).